The sequence spans 215 residues: Adenylate kinase (215 aa).

10 to 15 (GAGKGT) contributes to the ATP binding site. The tract at residues 30 to 59 (STGDMLRAAVKAGSPLGQQVKGVMDSGGLV) is NMP. AMP is bound by residues threonine 31, arginine 36, 57-59 (GLV), 85-88 (GFPR), and glutamine 92. The LID stretch occupies residues 122 to 159 (GRRVHPASGRVYHTEHNPPKVAGKDDVTGEELIQREDD). Residues arginine 123 and 132-133 (VY) contribute to the ATP site. The AMP site is built by arginine 156 and arginine 167. Glycine 201 is a binding site for ATP.

The protein belongs to the adenylate kinase family. In terms of assembly, monomer.

It localises to the cytoplasm. The catalysed reaction is AMP + ATP = 2 ADP. It participates in purine metabolism; AMP biosynthesis via salvage pathway; AMP from ADP: step 1/1. Catalyzes the reversible transfer of the terminal phosphate group between ATP and AMP. Plays an important role in cellular energy homeostasis and in adenine nucleotide metabolism. In Pseudomonas aeruginosa (strain LESB58), this protein is Adenylate kinase.